Consider the following 121-residue polypeptide: UPF0102 protein BDI_2565 (121 aa).

The protein belongs to the UPF0102 family.

The chain is UPF0102 protein BDI_2565 from Parabacteroides distasonis (strain ATCC 8503 / DSM 20701 / CIP 104284 / JCM 5825 / NCTC 11152).